Reading from the N-terminus, the 53-residue chain is 20 kDa chaperonin (53 aa).

2 cpn-10 domain regions span residues 1–10 (YTSIKPLGDR) and 11–53 (VAEA…KITP).

This sequence belongs to the GroES chaperonin family. As to quaternary structure, forms stable complexes with cpn60 in the presence of ATP. Homotetramer.

It localises to the plastid. Its subcellular location is the chloroplast. Seems to function only as a co-chaperone, along with cpn60, and in certain cases is essential for the discharge of biologically active proteins from cpn60. This is 20 kDa chaperonin from Populus euphratica (Euphrates poplar).